We begin with the raw amino-acid sequence, 1664 residues long: MDISKPVGSEITSVDFGILTAKEIRNLSAKQITNPTVLDNLGHPVSGGLYDLALGAFLRNLCSTCGLDEKFCPGHQGHIELPVPCYNPLFFNQLYIYLRASCLFCHHFRLKSVEVHRYACKLRLLQYGLIDESYKLDEITLGSLNSSMYTDDEAIEDNEDEMDGEGSKQSKDISSTLLNELKSKRSEYVDMAIAKALSDGRTTERGSFTATVNDERKKLVHEFHKKLLSRGKCDNCGMFSPKFRKDGFTKIFETALNEKQITNNRVKGFIRQDMIKKQKQAKKLDGSNEASANDEESFDVGRNPTTRPKTGSTYILSTEVKNILDTVFRKEQCVLQYVFHSRPNLSRKLVKADSFFMDVLVVPPTRFRLPSKLGEEVHENSQNQLLSKVLTTSLLIRDLNDDLSKLQKDKVSLEDRRVIFSRLMNAFVTIQNDVNAFIDSTKAQGRTSGKVPIPGVKQALEKKEGLFRKHMMGKRVNYAARSVISPDPNIETNEIGVPPVFAVKLTYPEPVTAYNIAELRQAVINGPDKWPGATQIQNEDGSLVSLIGMSVEQRKALANQLLTPSSNVSTHTLNKKVYRHIKNRDVVLMNRQPTLHKASMMGHKVRVLPNEKTLRLHYANTGAYNADFDGDEMNMHFPQNENARAEALNLANTDSQYLTPTSGSPVRGLIQDHISAGVWLTSKDSFFTREQYQQYIYGCIRPEDGHTTRSKIVTLPPTIFKPYPLWTGKQIITTVLLNVTPPDMPGINLISKNKIKNEYWGKGSLENEVLFKDGALLCGILDKSQYGASKYGIVHSLHEVYGPEVAAKVLSVLGRLFTNYITATAFTCGMDDLRLTAEGNKWRTDILKTSVDTGREAAAEVTNLDKDTPADDPELLKRLQEILRDNNKSGILDAVTSSKVNAITSQVVSKCVPDGTMKKFPCNSMQAMALSGAKGSNVNVSQIMCLLGQQALEGRRVPVMVSGKTLPSFKPYETDAMAGGYVKGRFYSGIKPQEYYFHCMAGREGLIDTAVKTSRSGYLQRCLTKQLEGVHVSYDNSIRDADGTLVQFMYGGDAIDITKESHMTQFEFCLDNYYALLKKYNPSALIEHLDVESALKYSKKTLKYRKKHSKEPHYKQSVKYDPVLAKYNPAKYLGSVSENFQDKLESFLDKNSKLFKSSDGVNEKKFRALMQLKYMRSLINPGEAVGIIASQSVGEPSTQMTLNTFHFAGHGAANVTLGIPRLREIVMTASAAIKTPQMTLPIWNDVSDEQADTFCKSISKVLLSEVIDKVIVTETTGTSNTAGGNAARSYVIHMRFFDNNEYSEEYDVSKEELQNVISNQFIHLLEAAIVKEIKKQKRTTGPDIGVAVPRLQTDVANSSSNSKRLEEDNDEEQSHKKTKQAVSYDEPDEDEIETMREAEKSSDEEGIDSDKESDSDSEDEDVDMNEQINKSIVEANNNMNKVQRDRQSAIISHHRFITKYNFDDESGKWCEFKLELAADTEKLLMVNIVEEICRKSIIRQIPHIDRCVHPEPENGKRVLVTEGVNFQAMWDQEAFIDVDGITSNDVAAVLKTYGVEAARNTIVNEINNVFSRYAISVSFRHLDLIADMMTRQGTYLAFNRQGMETSTSSFMKMSYETTCQFLTKAVLDNEREQLDSPSARIVVGKLNNVGTGSFDVLAKVPNAA.

The Zn(2+) site is built by C62, C65, C72, H75, C102, C105, C233, and C236. Residues 280 to 310 form a disordered region; the sequence is QAKKLDGSNEASANDEESFDVGRNPTTRPKT. D627, D629, and D631 together coordinate Mg(2+). A Phosphoserine modification is found at S889. The bridging helix stretch occupies residues 992-1004; sequence PQEYYFHCMAGRE. Positions 1343–1423 are disordered; it reads DIGVAVPRLQ…DSDSEDEDVD (81 aa). Positions 1393 to 1414 are enriched in basic and acidic residues; the sequence is ETMREAEKSSDEEGIDSDKESD. Position 1636 is a phosphoserine (S1636).

It belongs to the RNA polymerase beta' chain family. In terms of assembly, component of the RNA polymerase I (Pol I) complex consisting of 14 subunits: RPA135, RPA190, RPC40, RPA14, RPB5, RPO26, RPA43, RPB8, RPA12, RPB10, RPC19, RPC10, RPA49 and RPA34. The complex is composed of a horseshoe-shaped core containing ten subunits (RPA135, RPA190, RPB5, RPO26, RPB8, RPB10, RPC10, RPA12, RPC19 and RPC40) where RPA135 and RPA190 form the DNA-binding cleft. Outside of the core, RPA14 and RPA43 form the stalk that mediates interactions with transcription initiation factors and newly synthesized RNA.

The protein resides in the nucleus. The protein localises to the nucleolus. It catalyses the reaction RNA(n) + a ribonucleoside 5'-triphosphate = RNA(n+1) + diphosphate. Functionally, DNA-dependent RNA polymerases catalyze the transcription of DNA into RNA using the four ribonucleoside triphosphates as substrates. Component of RNA polymerase I (Pol I) which synthesizes ribosomal RNA precursors. Besides, RNA polymerase I has intrinsic RNA cleavage activity. RPA190 and RPA135 both contribute to the polymerase catalytic activity and together form the Pol I active center. In addition, subunit RPA12 contributes a catalytic zinc ribbon that is required for RNA cleavage by Pol I. A single stranded DNA template strand of the promoter is positioned within the central active site cleft of Pol I. A bridging helix emanates from RPA190 and crosses the cleft near the catalytic site and is thought to promote translocation of Pol I by acting as a ratchet that moves the RNA-DNA hybrid through the active site by switching from straight to bent conformations at each step of nucleotide addition. This is DNA-directed RNA polymerase I subunit RPA190 (RPA190) from Saccharomyces cerevisiae (strain ATCC 204508 / S288c) (Baker's yeast).